Here is a 101-residue protein sequence, read N- to C-terminus: Small ribosomal subunit protein uS14 (101 aa).

This sequence belongs to the universal ribosomal protein uS14 family. As to quaternary structure, part of the 30S ribosomal subunit. Contacts proteins S3 and S10.

Binds 16S rRNA, required for the assembly of 30S particles and may also be responsible for determining the conformation of the 16S rRNA at the A site. This is Small ribosomal subunit protein uS14 from Pseudomonas syringae pv. syringae (strain B728a).